The sequence spans 297 residues: Calponin-1 (297 aa).

The region spanning 28–131 is the Calponin-homology (CH) domain; the sequence is HQREQELREW…STLLALASMA (104 aa). 3 Calponin-like repeats span residues 164–189, 204–229, and 243–268; these read IGLQ…RHLY, ISLQ…RQIF, and VSLQ…RQVY. At Thr-170 the chain carries Phosphothreonine; by ROCK2. Ser-175 is subject to Phosphoserine; by ROCK2. A phosphothreonine; by ROCK2 mark is found at Thr-180 and Thr-184. At Thr-259 the chain carries Phosphothreonine; by ROCK2.

The protein belongs to the calponin family. In terms of assembly, part of cGMP kinase signaling complex at least composed of ACTA2/alpha-actin, CNN1/calponin H1, PLN/phospholamban, PRKG1 and ITPR1.

In terms of biological role, thin filament-associated protein that is implicated in the regulation and modulation of smooth muscle contraction. It is capable of binding to actin, calmodulin and tropomyosin. The interaction of calponin with actin inhibits the actomyosin Mg-ATPase activity. The sequence is that of Calponin-1 (CNN1) from Ovis aries (Sheep).